A 311-amino-acid chain; its full sequence is tRNA pseudouridine synthase B (311 aa).

The Nucleophile role is filled by Asp52.

The protein belongs to the pseudouridine synthase TruB family. Type 1 subfamily.

It carries out the reaction uridine(55) in tRNA = pseudouridine(55) in tRNA. Its function is as follows. Responsible for synthesis of pseudouridine from uracil-55 in the psi GC loop of transfer RNAs. The polypeptide is tRNA pseudouridine synthase B (Burkholderia mallei (strain ATCC 23344)).